The chain runs to 631 residues: Shootin-1 (631 aa).

Met-1 is subject to N-acetylmethionine. A phosphoserine mark is found at Ser-3 and Ser-4. Residues 7-353 (EKQLQLITSL…RVNQSENSVP (347 aa)) are a coiled coil. Residue Ser-101 is modified to Phosphoserine; by PAK1. Ser-249 is subject to Phosphoserine. Disordered stretches follow at residues 343-404 (KRVN…EVTD) and 417-508 (IKKG…KSMP). A compositionally biased stretch (pro residues) spans 352–369 (VPPPPPPPPPLPPPPPNP). Ser-375 is subject to Phosphoserine. Over residues 456–465 (LNKSTSSRSL) the composition is skewed to polar residues. Ser-473 carries the post-translational modification Phosphoserine. Phosphothreonine is present on Thr-487. Over residues 490 to 505 (ADSSSPTGILATSESK) the composition is skewed to polar residues. Ser-494 is subject to Phosphoserine. Thr-496 is subject to Phosphothreonine. A phosphoserine mark is found at Ser-506 and Ser-515. A disordered region spans residues 530 to 631 (FNNPCPLTPE…KTGETDSSNC (102 aa)). A Phosphothreonine modification is found at Thr-537. Over residues 590 to 602 (PQTKDQAAEKDPT) the composition is skewed to basic and acidic residues.

It belongs to the shootin family. As to quaternary structure, interacts with L1CAM; this interaction occurs at axonal growth cones. Interacts with actin filament retrograde flow; this interaction is enhanced in a netrin-1- and PAK1-dependent manner and promotes F-actin-substrate coupling and concomitant formation of traction forces at axonal growth cones. Interacts with RUFY3. Interacts with PFN2. Interacts (via N-terminus) with KIF20B; this interaction is direct and promotes the association of SHTN1 to microtubules in primary neurons. Associates with microtubule. In terms of processing, phosphorylated on Ser-101 and Ser-249 by PAK1 through a CDC42- and RAC1-dependent signaling pathway, which enhances its association with F-actin retrograde flow in filopodia and lamellipodia of axonal growth cones. Phosphorylation on Ser-101 and Ser-249 is increased by netrin-1. As to expression, expressed in hippocampal neurons.

The protein resides in the perikaryon. It is found in the cell projection. Its subcellular location is the axon. It localises to the growth cone. The protein localises to the cytoplasm. The protein resides in the cytoskeleton. It is found in the filopodium. Its subcellular location is the lamellipodium. Involved in the generation of internal asymmetric signals required for neuronal polarization and neurite outgrowth. Mediates netrin-1-induced F-actin-substrate coupling or 'clutch engagement' within the axon growth cone through activation of CDC42, RAC1 and PAK1-dependent signaling pathway, thereby converting the F-actin retrograde flow into traction forces, concomitantly with filopodium extension and axon outgrowth. Plays a role in cytoskeletal organization by regulating the subcellular localization of phosphoinositide 3-kinase (PI3K) activity at the axonal growth cone. Also plays a role in regenerative neurite outgrowth. In the developing cortex, cooperates with KIF20B to promote both the transition from the multipolar to the bipolar stage and the radial migration of cortical neurons from the ventricular zone toward the superficial layer of the neocortex. Involved in the accumulation of phosphatidylinositol 3,4,5-trisphosphate (PIP3) in the growth cone of primary hippocampal neurons. The sequence is that of Shootin-1 from Mus musculus (Mouse).